The chain runs to 957 residues: Glycine dehydrogenase (decarboxylating) (957 aa).

N6-(pyridoxal phosphate)lysine is present on Lys708.

The protein belongs to the GcvP family. In terms of assembly, the glycine cleavage system is composed of four proteins: P, T, L and H. Pyridoxal 5'-phosphate is required as a cofactor.

The catalysed reaction is N(6)-[(R)-lipoyl]-L-lysyl-[glycine-cleavage complex H protein] + glycine + H(+) = N(6)-[(R)-S(8)-aminomethyldihydrolipoyl]-L-lysyl-[glycine-cleavage complex H protein] + CO2. In terms of biological role, the glycine cleavage system catalyzes the degradation of glycine. The P protein binds the alpha-amino group of glycine through its pyridoxal phosphate cofactor; CO(2) is released and the remaining methylamine moiety is then transferred to the lipoamide cofactor of the H protein. The sequence is that of Glycine dehydrogenase (decarboxylating) from Salmonella heidelberg (strain SL476).